A 467-amino-acid chain; its full sequence is E3 ubiquitin-protein ligase IE61 (467 aa).

The RING-type zinc finger occupies 19 to 58 (CTICMSTVSDLGKTMPCLHDFCFVCIRAWTSTSVQCPLCR). Disordered stretches follow at residues 101–171 (GDVI…GVTK), 205–238 (QQPRTGGQDYRDRPVSVGINQDPRTMDRLPFRAT), 344–364 (IVRPETTSTGETSRGDERDTR), and 413–467 (DSAC…MKKS). Residues 116–143 (ESIQQPTSRSSREPIQSPNPGPLQSSAR) are compositionally biased toward polar residues. Residues 149–161 (SPSDSQQDSIQPP) show a composition bias toward low complexity. Positions 162-171 (TRDSSPGVTK) are enriched in polar residues. Residues 228–238 (RTMDRLPFRAT) are compositionally biased toward basic and acidic residues. Composition is skewed to low complexity over residues 429-443 (GESNTPSTSGSTSGS) and 450-459 (KSSAGKAGKG).

As to quaternary structure, interacts with host BTRC; this interaction seems to inactivate SCF-mediated protein degradation in general. In terms of processing, auto-ubiquitinated.

The catalysed reaction is S-ubiquitinyl-[E2 ubiquitin-conjugating enzyme]-L-cysteine + [acceptor protein]-L-lysine = [E2 ubiquitin-conjugating enzyme]-L-cysteine + N(6)-ubiquitinyl-[acceptor protein]-L-lysine.. Functionally, RING-finger E3 ubiquitin ligase that degrades host SP100, one of the major components of ND10 nuclear bodies, thereby disrupting the organization of these bodies. Also plays a role in the inhibition of host NF-kappa-B pathway by blocking the SCF(BTRC)-mediated addition of ubiquitin chains to host I-kappa-B-alpha/NFKBIA, thereby interfering with its degradation. The chain is E3 ubiquitin-protein ligase IE61 (61) from Varicella-zoster virus (strain Dumas) (HHV-3).